Consider the following 313-residue polypeptide: Aspartate carbamoyltransferase catalytic subunit (313 aa).

Residues Arg58 and Thr59 each coordinate carbamoyl phosphate. Lys86 lines the L-aspartate pocket. Residues Arg108, His136, and Gln139 each coordinate carbamoyl phosphate. L-aspartate contacts are provided by Arg169 and Arg223. Residues Gly264 and Pro265 each coordinate carbamoyl phosphate.

The protein belongs to the aspartate/ornithine carbamoyltransferase superfamily. ATCase family. Heterododecamer (2C3:3R2) of six catalytic PyrB chains organized as two trimers (C3), and six regulatory PyrI chains organized as three dimers (R2).

It catalyses the reaction carbamoyl phosphate + L-aspartate = N-carbamoyl-L-aspartate + phosphate + H(+). It participates in pyrimidine metabolism; UMP biosynthesis via de novo pathway; (S)-dihydroorotate from bicarbonate: step 2/3. In terms of biological role, catalyzes the condensation of carbamoyl phosphate and aspartate to form carbamoyl aspartate and inorganic phosphate, the committed step in the de novo pyrimidine nucleotide biosynthesis pathway. This Syntrophotalea carbinolica (strain DSM 2380 / NBRC 103641 / GraBd1) (Pelobacter carbinolicus) protein is Aspartate carbamoyltransferase catalytic subunit.